We begin with the raw amino-acid sequence, 375 residues long: S-adenosylmethionine:tRNA ribosyltransferase-isomerase (375 aa).

It belongs to the QueA family. As to quaternary structure, monomer.

It localises to the cytoplasm. The catalysed reaction is 7-aminomethyl-7-carbaguanosine(34) in tRNA + S-adenosyl-L-methionine = epoxyqueuosine(34) in tRNA + adenine + L-methionine + 2 H(+). It functions in the pathway tRNA modification; tRNA-queuosine biosynthesis. Functionally, transfers and isomerizes the ribose moiety from AdoMet to the 7-aminomethyl group of 7-deazaguanine (preQ1-tRNA) to give epoxyqueuosine (oQ-tRNA). The sequence is that of S-adenosylmethionine:tRNA ribosyltransferase-isomerase from Rickettsia typhi (strain ATCC VR-144 / Wilmington).